The following is a 190-amino-acid chain: Thioredoxin F-type, chloroplastic (190 aa).

The tract at residues 1–31 (MALHLSLSHQSWTSPAHPITSSDPTRSSVPG) is disordered. A chloroplast-targeting transit peptide spans 1–77 (MALHLSLSHQ…SMEQALGTQE (77 aa)). The segment covering 7 to 30 (LSHQSWTSPAHPITSSDPTRSSVP) has biased composition (polar residues). The Thioredoxin domain occupies 78 to 189 (MEAIVGKVTE…LLEAIQAARS (112 aa)). Active-site nucleophile residues include Cys-114 and Cys-117. The cysteines at positions 114 and 117 are disulfide-linked.

The protein belongs to the thioredoxin family. Plant F-type subfamily. In terms of assembly, forms a complex with heterodimeric ferredoxin-thioredoxin reductase (FTR) and ferredoxin.

The protein localises to the plastid. The protein resides in the chloroplast. In terms of biological role, participates in various redox reactions through the reversible oxidation of the active center dithiol to a disulfide. The F form is known to activate a number of enzymes of the photosynthetic carbon cycle. This is Thioredoxin F-type, chloroplastic from Spinacia oleracea (Spinach).